The following is a 575-amino-acid chain: Proline--tRNA ligase (575 aa).

This sequence belongs to the class-II aminoacyl-tRNA synthetase family. ProS type 1 subfamily. Homodimer.

The protein resides in the cytoplasm. It carries out the reaction tRNA(Pro) + L-proline + ATP = L-prolyl-tRNA(Pro) + AMP + diphosphate. Catalyzes the attachment of proline to tRNA(Pro) in a two-step reaction: proline is first activated by ATP to form Pro-AMP and then transferred to the acceptor end of tRNA(Pro). As ProRS can inadvertently accommodate and process non-cognate amino acids such as alanine and cysteine, to avoid such errors it has two additional distinct editing activities against alanine. One activity is designated as 'pretransfer' editing and involves the tRNA(Pro)-independent hydrolysis of activated Ala-AMP. The other activity is designated 'posttransfer' editing and involves deacylation of mischarged Ala-tRNA(Pro). The misacylated Cys-tRNA(Pro) is not edited by ProRS. This Anaeromyxobacter sp. (strain Fw109-5) protein is Proline--tRNA ligase.